The primary structure comprises 833 residues: Leucine--tRNA ligase (833 aa).

A 'HIGH' region motif is present at residues Pro41–His52. The 'KMSKS' region signature appears at Lys610–Ser614. Residue Lys613 participates in ATP binding.

It belongs to the class-I aminoacyl-tRNA synthetase family.

The protein localises to the cytoplasm. The catalysed reaction is tRNA(Leu) + L-leucine + ATP = L-leucyl-tRNA(Leu) + AMP + diphosphate. This Streptococcus pyogenes serotype M5 (strain Manfredo) protein is Leucine--tRNA ligase.